Reading from the N-terminus, the 765-residue chain is Polyadenylate-binding protein, cytoplasmic and nuclear (765 aa).

Low complexity predominate over residues 1–37 (MSADASTTPAADSNVTSTPETSTTPAAPAPEVTAVES). Residues 1–49 (MSADASTTPAADSNVTSTPETSTTPAAPAPEVTAVESTTAPNASQPHSA) form a disordered region. Positions 38–48 (TTAPNASQPHS) are enriched in polar residues. RRM domains follow at residues 49–127 (ASLY…WSQR), 137–214 (GNVF…HHIS), 230–307 (TNVY…RAQK), and 333–470 (VNLY…LAQR). Disordered stretches follow at residues 364 to 427 (VMRD…ADKK) and 619 to 657 (PGYG…PEEA). Residues 377–427 (ESDKEKENKEATKENEKESSEAEKAEKTEEKPADSGDEKKEDKESKKADKK) are compositionally biased toward basic and acidic residues. A compositionally biased stretch (low complexity) spans 628–637 (VPVQQGQMRP). The PABC domain occupies 659–736 (AGGLTAQALS…ALNVYDEYMK (78 aa)). The disordered stretch occupies residues 737-765 (NKGGESEATGEAAKPKEAAKETSTEENKS). A compositionally biased stretch (basic and acidic residues) spans 749-765 (AKPKEAAKETSTEENKS).

The protein belongs to the polyadenylate-binding protein type-1 family.

It is found in the cytoplasm. The protein resides in the nucleus. In terms of biological role, binds the poly(A) tail of mRNA. Appears to be an important mediator of the multiple roles of the poly(A) tail in mRNA biogenesis, stability and translation. In the nucleus, involved in both mRNA cleavage and polyadenylation. Is also required for efficient mRNA export to the cytoplasm. Acts in concert with a poly(A)-specific nuclease (PAN) to affect poly(A) tail shortening, which may occur concomitantly with either nucleocytoplasmic mRNA transport or translational initiation. In the cytoplasm, stimulates translation initiation and regulates mRNA decay through translation termination-coupled poly(A) shortening, probably mediated by PAN. The sequence is that of Polyadenylate-binding protein, cytoplasmic and nuclear (pab1) from Aspergillus oryzae (strain ATCC 42149 / RIB 40) (Yellow koji mold).